The chain runs to 430 residues: Enolase (430 aa).

Glutamine 163 contacts (2R)-2-phosphoglycerate. Catalysis depends on glutamate 205, which acts as the Proton donor. Aspartate 242, glutamate 288, and aspartate 315 together coordinate Mg(2+). Positions 340, 369, 370, and 391 each coordinate (2R)-2-phosphoglycerate. Lysine 340 functions as the Proton acceptor in the catalytic mechanism.

Belongs to the enolase family. The cofactor is Mg(2+).

Its subcellular location is the cytoplasm. The protein localises to the secreted. It localises to the cell surface. The catalysed reaction is (2R)-2-phosphoglycerate = phosphoenolpyruvate + H2O. It functions in the pathway carbohydrate degradation; glycolysis; pyruvate from D-glyceraldehyde 3-phosphate: step 4/5. Functionally, catalyzes the reversible conversion of 2-phosphoglycerate (2-PG) into phosphoenolpyruvate (PEP). It is essential for the degradation of carbohydrates via glycolysis. In Acidobacterium capsulatum (strain ATCC 51196 / DSM 11244 / BCRC 80197 / JCM 7670 / NBRC 15755 / NCIMB 13165 / 161), this protein is Enolase.